Here is a 187-residue protein sequence, read N- to C-terminus: TATA-box-binding protein (187 aa).

Tandem repeats lie at residues 10–86 (IENV…FDKL) and 101–179 (VQNI…VSRL).

Belongs to the TBP family.

General factor that plays a role in the activation of archaeal genes transcribed by RNA polymerase. Binds specifically to the TATA box promoter element which lies close to the position of transcription initiation. In Natronomonas pharaonis (strain ATCC 35678 / DSM 2160 / CIP 103997 / JCM 8858 / NBRC 14720 / NCIMB 2260 / Gabara) (Halobacterium pharaonis), this protein is TATA-box-binding protein.